Here is a 2599-residue protein sequence, read N- to C-terminus: Non-reducing polyketide synthase azaA (2599 aa).

The tract at residues 95–231 (PNILLSPMVV…AARSISSLQQ (137 aa)) is N-terminal acylcarrier protein transacylase domain (SAT). The Nucleophile; for transacylase activity role is filled by C132. H250 acts as the Proton donor/acceptor; for transacylase activity in catalysis. The Ketosynthase family 3 (KS3) domain occupies 372-790 (PNEIAVIGMS…GSNASMVVAQ (419 aa)). Residues C539, H674, and H713 each act as for beta-ketoacyl synthase activity in the active site. Residues 902-1193 (FGGQISNYVG…ITSMASRALG (292 aa)) form a malonyl-CoA:ACP transacylase (MAT) domain region. The N-terminal hotdog fold stretch occupies residues 1282 to 1413 (PKTLWSLIEA…GKLAFLSGQD (132 aa)). The region spanning 1282–1591 (PKTLWSLIEA…YHKVAKASMS (310 aa)) is the PKS/mFAS DH domain. The tract at residues 1310–1589 (LVSGHVIANT…INYHKVAKAS (280 aa)) is product template (PT) domain. Catalysis depends on H1314, which acts as the Proton acceptor; for dehydratase activity. Positions 1443–1591 (ADDIIQGRNI…YHKVAKASMS (149 aa)) are C-terminal hotdog fold. The active-site Proton donor; for dehydratase activity is D1499. The interval 1601 to 1652 (EAAPSSSTRAHPTSSSSPRLPGPFVPEDKSQNETQTAGTNAVAKKKSEKSAQ) is disordered. The span at 1602-1619 (AAPSSSTRAHPTSSSSPR) shows a compositional bias: low complexity. A Carrier domain is found at 1653–1727 (QNVLDKTRAL…GLVEYVQSAV (75 aa)). Position 1687 is an O-(pantetheine 4'-phosphoryl)serine (S1687). The interval 1749–1779 (NLAASPSSSSSSTNLTEDSSLDPTETTTNIS) is disordered. Residues 1750-1766 (LAASPSSSSSSTNLTED) show a composition bias toward low complexity. Residues 1769–1779 (LDPTETTTNIS) show a composition bias toward polar residues. A methyltransferase domain region spans residues 1952–2140 (DSLLNKLSYR…VGYGQVDWTD (189 aa)). The tract at residues 2222–2467 (ITGATGSLGV…LCWTPVNDVA (246 aa)) is NADPH-binding (R) domain.

It depends on pantetheine 4'-phosphate as a cofactor.

Its pathway is secondary metabolite biosynthesis. In terms of biological role, non-reducing polyketide synthase; part of the gene cluster that mediates the biosynthesis of azaphilones, a class of fungal metabolites characterized by a highly oxygenated pyrano-quinone bicyclic core and exhibiting a broad range of bioactivities. In the first step, the non-reducing polyketide synthase azaA forms the hexaketide precursor from successive condensations of five malonyl-CoA units, presumably with a simple acetyl-CoA starter unit. The reactive polyketide chain then undergoes a PT-mediated C2-C7 cyclization to afford the aromatic ring and is eventually released as an aldehyde through the R-domain. The putative ketoreductase azaE is proposed to catalyze the reduction of the terminal ketone resulting in the early culture product FK17-P2a. The monooxygenase azaH was demonstrated to be the only enzyme required to convert FK17-P2a to azanigerone E. AzaH first hydroxylates the benzaldehyde intermediate FK17-P2a at C4, which triggers the formation of the pyran-ring to afford azanigerone E. In parallel, the 2,4-dimethylhexanoyl chain is synthesized by the HR-PKS azaB and is proposed to be transferred to the C4-hydroxyl of azanigerone E by the acyltransferase azaD directly from the ACP domain of azaB. Alternatively, the 2,4-dimethyl-hexanoyl chain may be offloaded from the HR-PKS as a carboxylic acid and converted to an acyl-CoA by azaF. The resulting acyl-CoA molecule could then be taken up as a substrate by AzaD to form azanigerone B. To yield the carboxylic acid substituent in azanigerone A, the hydroxypropyl side chain of azanigerone B would need to undergo a C-C oxidative cleavage catalyzed by cytochrome P450 AzaI. AzaI is proposed to act on a vicinal diol that leads to a C-C bond scission either through an alkoxyradical intermediate or a peroxy complex. In the biosynthesis of azanigerone A, azanigerone B first undergoes hydroxylation at C10, possibly catalyzed by one of the two FAD-dependent monooxygenases encoded in the cluster, azaG or azaL, resulting in the vicinal diol azanigerone C. Oxidative cleavage of azanigerone C by azaI would yield the corresponding aldehyde derivative of azanigerone A. Finally, the dehydrogenase azaJ is proposed to convert the aldehyde functional group into the carboxylic acid, completing the conversion from azanigerone B to azanigerone A. Alternatively, the oxidation of aldehyde to carboxylic acid may be catalyzed by the same P450 enzyme azaI via consecutive oxidation or by endogenous alcohol dehydrogenase. This Aspergillus niger (strain ATCC 1015 / CBS 113.46 / FGSC A1144 / LSHB Ac4 / NCTC 3858a / NRRL 328 / USDA 3528.7) protein is Non-reducing polyketide synthase azaA.